The sequence spans 354 residues: Protein REDOX 1 (354 aa).

Residue Cys-44 participates in Zn(2+) binding. NAD(+) is bound at residue 45 to 49 (HSDLH). The Zn(2+) site is built by His-66, Cys-97, Cys-100, Cys-103, and Cys-111. NAD(+)-binding positions include 185 to 190 (GLGGLG), Lys-214, 271 to 273 (VGA), 295 to 297 (SAV), and Arg-340.

This sequence belongs to the zinc-containing alcohol dehydrogenase family. Zn(2+) serves as cofactor. Expressed in leaf epidermis.

It carries out the reaction 3,17-didehydrostemmadenine + NADPH + H2O = (16S)-deshydroxymethyl-stemmadenine + formate + NADP(+). The catalysed reaction is 3,17-didehydrostemmadenine + NADPH + H2O = (16R)-deshydroxymethyl-stemmadenine + formate + NADP(+). It catalyses the reaction 17-dehydrostemmadenine + NADP(+) = 3,17-didehydrostemmadenine + NADPH. It functions in the pathway alkaloid biosynthesis. In terms of biological role, component of iboga and aspidosperma monoterpenoid indole alkaloids (MIAs, e.g. tabersonine and catharanthine) biosynthesis pathway from 19E-geissoschizine. Catalyzes the first oxidation step of the unstable intermediate product resulting from the reaction triggered by the geissoschizine oxidase (GO) in the stemmadenine biosynthesis process from 19E-geissoschizine. This Catharanthus roseus (Madagascar periwinkle) protein is Protein REDOX 1.